The primary structure comprises 61 residues: MRTTVAILLVLFALSAILAFYPDTTAEAKGCVKKVDCVCKGKGKKNHRSMCINGKCYCLKG.

The signal sequence occupies residues Met-1 to Ala-19. 3 cysteine pairs are disulfide-bonded: Cys-31–Cys-51, Cys-37–Cys-56, and Cys-39–Cys-58.

Expressed by the venom gland.

The protein localises to the secreted. This Lychas mucronatus (Chinese swimming scorpion) protein is Putative neurotoxin-D.